The sequence spans 460 residues: Cysteine--tRNA ligase (460 aa).

C27 contributes to the Zn(2+) binding site. Positions 29 to 39 (PTVYDDAHLGH) match the 'HIGH' region motif. Positions 202, 227, and 231 each coordinate Zn(2+). The 'KMSKS' region signature appears at 259–263 (KMSKS). K262 contacts ATP.

Belongs to the class-I aminoacyl-tRNA synthetase family. In terms of assembly, monomer. Zn(2+) is required as a cofactor.

The protein localises to the cytoplasm. It carries out the reaction tRNA(Cys) + L-cysteine + ATP = L-cysteinyl-tRNA(Cys) + AMP + diphosphate. The sequence is that of Cysteine--tRNA ligase from Campylobacter lari (strain RM2100 / D67 / ATCC BAA-1060).